The following is a 1058-amino-acid chain: Lon protease homolog, mitochondrial (1058 aa).

The N-terminal 47 residues, 1–47, are a transit peptide targeting the mitochondrion; that stretch reads MLTRIRNAGVGGNAARRVRLLAGYTGARMAHAAALNSTTGAGGAARA. Residues 72 to 151 form a disordered region; that stretch reads GGQCILKQDR…RSNPPSEGEV (80 aa). Basic and acidic residues-rich tracts occupy residues 78 to 97 and 106 to 118; these read KQDREPDQSDDKKVPPRAEE and DEEAERQPREEQA. A compositionally biased stretch (gly residues) spans 129-142; sequence GSGGSASSAGGGGR. Residues 158 to 412 enclose the Lon N-terminal domain; it reads LMVLPMSNRP…KALVFIKKEV (255 aa). ATP is bound at residue 564 to 571; it reads GPPGVGKT. A disordered region spans residues 778 to 814; that stretch reads TPKSAPAETNIEPENGKPDASAKPLTNNLPAPEPLNI. A Lon proteolytic domain is found at 844-1030; the sequence is KTPAGVVMGL…DDVFNVLFGS (187 aa). Residues Ser936 and Lys979 contribute to the active site.

It belongs to the peptidase S16 family. In terms of assembly, homohexamer or homoheptamer. Organized in a ring with a central cavity.

It is found in the mitochondrion matrix. The enzyme catalyses Hydrolysis of proteins in presence of ATP.. Functionally, ATP-dependent serine protease that mediates the selective degradation of misfolded, unassembled or oxidatively damaged polypeptides as well as certain short-lived regulatory proteins in the mitochondrial matrix. May also have a chaperone function in the assembly of inner membrane protein complexes. Participates in the regulation of mitochondrial gene expression and in the maintenance of the integrity of the mitochondrial genome. Binds to mitochondrial DNA in a site-specific manner. This Eremothecium gossypii (strain ATCC 10895 / CBS 109.51 / FGSC 9923 / NRRL Y-1056) (Yeast) protein is Lon protease homolog, mitochondrial.